The primary structure comprises 264 residues: Carbonic anhydrase (264 aa).

The tat-type signal signal peptide spans Met1–Ala33. Residues Val36–Ile264 form the Alpha-carbonic anhydrase domain. The Zn(2+) site is built by His127, His129, and His146. Thr214 to Thr215 is a substrate binding site.

This sequence belongs to the alpha-carbonic anhydrase family. Requires Zn(2+) as cofactor. Predicted to be exported by the Tat system. The position of the signal peptide cleavage has not been experimentally proven.

The catalysed reaction is hydrogencarbonate + H(+) = CO2 + H2O. Reversible hydration of carbon dioxide. The sequence is that of Carbonic anhydrase (ecaA) from Nostoc sp. (strain PCC 7120 / SAG 25.82 / UTEX 2576).